Reading from the N-terminus, the 1037-residue chain is MGVRNCLYGNNMSGQRDIPPEIGEQPEQPPLEAPGAAAPGAGPSPAEEMETEPPHNEPIPVENDGEACGPPEVSRPNFQVLNPAFREAGAHGSYSPPPEEAMPFEAEQPSLGGFWPTLEQPGFPSGVHAGLEAFGPALMEPGAFSGARPGLGGYSPPPEEAMPFEFDQPAQRGCSQLLLQVPDLAPGGPGAAGVPGAPPEEPQALRPAKAGSRGGYSPPPEETMPFELDGEGFGDDSPPPGLSRVIAQVDGSSQFAAVAASSAVRLTPAANAPPLWVPGAIGSPSQEAVRPPSNFTGSSPWMEISGPPFEIGSAPAGVDDTPVNMDSPPIALDGPPIKVSGAPDKRERAERPPVEEEAAEMEGAADAAEGGKVPSPGYGSPAAGAASADTAARAAPAAPADPDSGATPEDPDSGTAPADPDSGAFAADPDSGAAPAAPADPDSGAAPDAPADPDSGAAPDAPADPDAGAAPEAPAAPAAAETRAAHVAPAAPDAGAPTAPAASATRAAQVRRAASAAPASGARRKIHLRPPSPEIQAADPPTPRPTRASAWRGKSESSRGRRVYYDEGVASSDDDSSGDESDDGTSGCLRWFQHRRNRRRRKPQRNLLRNFLVQAFGGCFGRSESPQPKASRSLKVKKVPLAEKRRQMRKEALEKRAQKRAEKKRSKLIDKQLQDEKMGYMCTHRLLLLGAGESGKSTIVKQMRILHVNGFNGEGGEEDPQAARSNSDGEKATKVQDIKNNLKEAIETIVAAMSNLVPPVELANPENQFRVDYILSVMNVPDFDFPPEFYEHAKALWEDEGVRACYERSNEYQLIDCAQYFLDKIDVIKQADYVPSDQDLLRCRVLTSGIFETKFQVDKVNFHMFDVGGQRDERRKWIQCFNDVTAIIFVVASSSYNMVIREDNQTNRLQEALNLFKSIWNNRWLRTISVILFLNKQDLLAEKVLAGKSKIEDYFPEFARYTTPEDATPEPGEDPRVTRAKYFIRDEFLRISTASGDGRHYCYPHFTCAVDTENIRRVFNDCRDIIQRMHLRQYELL.

Disordered stretches follow at residues 1–105, 185–224, 283–588, and 640–666; these read MGVR…MPFE, APGGPGAAGVPGAPPEEPQALRPAKAGSRGGYSPPPEETM, SPSQ…TSGC, and PLAEKRRQMRKEALEKRAQKRAEKKRS. A compositionally biased stretch (low complexity) spans 33 to 46; it reads APGAAAPGAGPSPA. Residues 343-354 show a composition bias toward basic and acidic residues; it reads PDKRERAERPPV. Low complexity-rich tracts occupy residues 361–408 and 416–521; these read MEGA…GATP and APAD…PASG. A compositionally biased stretch (basic and acidic residues) spans 553 to 565; sequence GKSESSRGRRVYY. Positions 572 to 583 are enriched in acidic residues; that stretch reads SDDDSSGDESDD. Basic and acidic residues predominate over residues 640–660; sequence PLAEKRRQMRKEALEKRAQKR. Positions 641–667 form a coiled coil; sequence LAEKRRQMRKEALEKRAQKRAEKKRSK. Residues 682–1037 form the G-alpha domain; it reads CTHRLLLLGA…RMHLRQYELL (356 aa). The segment at 685–698 is G1 motif; that stretch reads RLLLLGAGESGKST. Residue 690 to 698 participates in GTP binding; that stretch reads GAGESGKST. Mg(2+) is bound at residue Ser697. The interval 711–734 is disordered; sequence FNGEGGEEDPQAARSNSDGEKATK. Residues 730–756 adopt a coiled-coil conformation; sequence EKATKVQDIKNNLKEAIETIVAAMSNL. Residues 839–847 form a G2 motif region; sequence DLLRCRVLT. GTP is bound by residues 840–847, 866–870, and 935–938; these read LLRCRVLT, DVGGQ, and NKQD. At Arg844 the chain carries ADP-ribosylarginine; by cholera toxin. Thr847 lines the Mg(2+) pocket. A G3 motif region spans residues 862 to 871; it reads FHMFDVGGQR. The interval 931-938 is G4 motif; it reads ILFLNKQD. The residue at position 995 (Ser995) is a Phosphoserine. The G5 motif stretch occupies residues 1007-1012; the sequence is TCAVDT. Residue Ala1009 participates in GTP binding.

The protein belongs to the G-alpha family. G(s) subfamily. G proteins are composed of 3 units; alpha, beta and gamma. The alpha chain contains the guanine nucleotide binding site. Interacts through its N-terminal region with ALEX which is produced from the same locus in a different open reading frame. This interaction may inhibit its adenylyl cyclase-stimulating activity. Interacts with MAGED2.

It localises to the cell membrane. Its subcellular location is the apical cell membrane. It catalyses the reaction GTP + H2O = GDP + phosphate + H(+). Guanine nucleotide-binding proteins (G proteins) function as transducers in numerous signaling pathways controlled by G protein-coupled receptors (GPCRs). The alpha chain contains the guanine nucleotide binding site and alternates between an active, GTP-bound state and an inactive, GDP-bound state. Signaling by an activated GPCR promotes GDP release and GTP binding. The alpha subunit has a low GTPase activity that converts bound GTP to GDP, thereby terminating the signal. Both GDP release and GTP hydrolysis are modulated by numerous regulatory proteins. Signaling involves the activation of adenylyl cyclases, resulting in increased levels of the signaling molecule cAMP. GNAS functions downstream of several GPCRs, including beta-adrenergic receptors. XLas isoforms interact with the same set of receptors as Gnas isoforms. The sequence is that of Guanine nucleotide-binding protein G(s) subunit alpha isoforms XLas (GNAS) from Homo sapiens (Human).